Consider the following 776-residue polypeptide: Protein phosphatase 1 regulatory subunit 21 (776 aa).

Coiled-coil stretches lie at residues 4-206 (GDLQ…LKTL), 432-466 (RLHDISQELSKHYNNKAALEQELPAATDKLKTTND), and 555-597 (ESRE…KETL).

In terms of assembly, component of the FERRY complex.

The protein resides in the early endosome. Component of the FERRY complex (Five-subunit Endosomal Rab5 and RNA/ribosome intermediary). The FERRY complex directly interacts with mRNAs and RAB5A, and functions as a RAB5A effector involved in the localization and the distribution of specific mRNAs most likely by mediating their endosomal transport. The complex recruits mRNAs and ribosomes to early endosomes through direct mRNA-interaction. Putative regulator of protein phosphatase 1 (PP1) activity. May play a role in the endosomal sorting process or in endosome maturation pathway. This chain is Protein phosphatase 1 regulatory subunit 21 (ppp1r21), found in Xenopus laevis (African clawed frog).